The sequence spans 470 residues: Methylenetetrahydrofolate--tRNA-(uracil-5-)-methyltransferase TrmFO (470 aa).

Position 10-15 (10-15) interacts with FAD; sequence GAGLAG.

It belongs to the MnmG family. TrmFO subfamily. FAD serves as cofactor.

Its subcellular location is the cytoplasm. The enzyme catalyses uridine(54) in tRNA + (6R)-5,10-methylene-5,6,7,8-tetrahydrofolate + NADH + H(+) = 5-methyluridine(54) in tRNA + (6S)-5,6,7,8-tetrahydrofolate + NAD(+). It carries out the reaction uridine(54) in tRNA + (6R)-5,10-methylene-5,6,7,8-tetrahydrofolate + NADPH + H(+) = 5-methyluridine(54) in tRNA + (6S)-5,6,7,8-tetrahydrofolate + NADP(+). Functionally, catalyzes the folate-dependent formation of 5-methyl-uridine at position 54 (M-5-U54) in all tRNAs. In Prochlorococcus marinus (strain MIT 9312), this protein is Methylenetetrahydrofolate--tRNA-(uracil-5-)-methyltransferase TrmFO.